The chain runs to 132 residues: 3'-dehydrocarminate deglycosidase beta subunit (132 aa).

This sequence belongs to the C-glycoside deglycosidase beta subunit family. As to quaternary structure, heterodimer composed of an alpha subunit (CarB) and a beta subunit (CarC). Mg(2+) serves as cofactor.

The catalysed reaction is 3'-dehydrocarminate + H(+) = kermesate + 1,5-anhydro-D-erythro-hex-1-en-3-ulose. With respect to regulation, activity is strongly reduced in the presence of chelating agents. Carbon-carbon bond-cleaving enzyme which participates in a carminate degradation pathway. Cleaves the C-C bond in 3'-dehydrocarminate to form kermesate. Also shows weak activity with other C-glycosides, such as 3''-dehydropuerarin (3''-oxo-puerarin), 3''-dehydroisoorientin (3''-oxo-homoorientin) and 3'-dehydromangiferin (3'-oxo-mangiferin). The protein is 3'-dehydrocarminate deglycosidase beta subunit of Microbacterium sp.